The sequence spans 361 residues: Glyceraldehyde-3-phosphate dehydrogenase, glycosomal (361 aa).

NAD(+) contacts are provided by residues 13–14, Asp39, and Arg93; that span reads RI. Residues 166 to 168, Thr198, 227 to 228, and Arg250 each bind D-glyceraldehyde 3-phosphate; these read SCT and TG. Cys167 functions as the Nucleophile in the catalytic mechanism. An NAD(+)-binding site is contributed by Asn336. The Microbody targeting signal motif lies at 359-361; sequence SKL.

This sequence belongs to the glyceraldehyde-3-phosphate dehydrogenase family. Homotetramer.

Its subcellular location is the glycosome. The enzyme catalyses D-glyceraldehyde 3-phosphate + phosphate + NAD(+) = (2R)-3-phospho-glyceroyl phosphate + NADH + H(+). The protein operates within carbohydrate degradation; glycolysis; pyruvate from D-glyceraldehyde 3-phosphate: step 1/5. This chain is Glyceraldehyde-3-phosphate dehydrogenase, glycosomal (GAPDG), found in Crithidia fasciculata.